A 94-amino-acid polypeptide reads, in one-letter code: Enhancer of yellow 2 transcription factor (94 aa).

Belongs to the ENY2 family. In terms of assembly, component of the nuclear pore complex (NPC)-associated AMEX complex (anchoring and mRNA export complex), composed of at least e(y)2 and xmas-2. Component of the SAGA transcription coactivator-HAT complexes, at least composed of Ada2b, e(y)2, Pcaf/Gcn5, Taf10 and Nipped-A/Trrap. Within the SAGA complex, e(y)2, Sgf11, and not/nonstop form an additional subcomplex of SAGA called the DUB module (deubiquitination module). Component of the THO complex, composed of at least e(y)2, HPR1, THO2, THOC5, THOC6 and THOC7. Interacts with e(y)1. Interacts with su(Hw) (via zinc fingers). Interacts with xmas-2; required for localization to the nuclear periphery. Interacts with the nuclear pore complex (NPC).

The protein localises to the nucleus. The protein resides in the nucleoplasm. Its subcellular location is the cytoplasm. In terms of biological role, involved in mRNA export coupled transcription activation by association with both the AMEX and the SAGA complexes. The SAGA complex is a multiprotein complex that activates transcription by remodeling chromatin and mediating histone acetylation and deubiquitination. Within the SAGA complex, participates in a subcomplex that specifically deubiquitinates histone H2B. The SAGA complex is recruited to specific gene promoters by activators, where it is required for transcription. Required for nuclear receptor-mediated transactivation. Involved in transcription elongation by recruiting the THO complex onto nascent mRNA. The AMEX complex functions in docking export-competent ribonucleoprotein particles (mRNPs) to the nuclear entrance of the nuclear pore complex (nuclear basket). AMEX participates in mRNA export and accurate chromatin positioning in the nucleus by tethering genes to the nuclear periphery. The protein is Enhancer of yellow 2 transcription factor of Drosophila grimshawi (Hawaiian fruit fly).